The sequence spans 145 residues: D-aminoacyl-tRNA deacylase (145 aa).

Residues 137 to 138 (GP) carry the Gly-cisPro motif, important for rejection of L-amino acids motif.

This sequence belongs to the DTD family. In terms of assembly, homodimer.

It localises to the cytoplasm. The enzyme catalyses glycyl-tRNA(Ala) + H2O = tRNA(Ala) + glycine + H(+). It catalyses the reaction a D-aminoacyl-tRNA + H2O = a tRNA + a D-alpha-amino acid + H(+). An aminoacyl-tRNA editing enzyme that deacylates mischarged D-aminoacyl-tRNAs. Also deacylates mischarged glycyl-tRNA(Ala), protecting cells against glycine mischarging by AlaRS. Acts via tRNA-based rather than protein-based catalysis; rejects L-amino acids rather than detecting D-amino acids in the active site. By recycling D-aminoacyl-tRNA to D-amino acids and free tRNA molecules, this enzyme counteracts the toxicity associated with the formation of D-aminoacyl-tRNA entities in vivo and helps enforce protein L-homochirality. This Pseudomonas syringae pv. syringae (strain B728a) protein is D-aminoacyl-tRNA deacylase.